Consider the following 58-residue polypeptide: Photosystem II reaction center protein K (58 aa).

Positions 1-21 (MFDLYLKNLLDLSDSGTVVLA) are excised as a propeptide. Residues 29–49 (IFDPIVDVLPVIPVFFLLLAF) form a helical membrane-spanning segment.

The protein belongs to the PsbK family. In terms of assembly, PSII is composed of 1 copy each of membrane proteins PsbA, PsbB, PsbC, PsbD, PsbE, PsbF, PsbH, PsbI, PsbJ, PsbK, PsbL, PsbM, PsbT, PsbX, PsbY, PsbZ, Psb30/Ycf12, at least 3 peripheral proteins of the oxygen-evolving complex and a large number of cofactors. It forms dimeric complexes.

Its subcellular location is the plastid. The protein resides in the chloroplast thylakoid membrane. Functionally, one of the components of the core complex of photosystem II (PSII). PSII is a light-driven water:plastoquinone oxidoreductase that uses light energy to abstract electrons from H(2)O, generating O(2) and a proton gradient subsequently used for ATP formation. It consists of a core antenna complex that captures photons, and an electron transfer chain that converts photonic excitation into a charge separation. This Zygnema circumcarinatum (Green alga) protein is Photosystem II reaction center protein K.